Consider the following 202-residue polypeptide: NADH-quinone oxidoreductase subunit C (202 aa).

Belongs to the complex I 30 kDa subunit family. As to quaternary structure, NDH-1 is composed of 14 different subunits. Subunits NuoB, C, D, E, F, and G constitute the peripheral sector of the complex.

It is found in the cell inner membrane. The enzyme catalyses a quinone + NADH + 5 H(+)(in) = a quinol + NAD(+) + 4 H(+)(out). NDH-1 shuttles electrons from NADH, via FMN and iron-sulfur (Fe-S) centers, to quinones in the respiratory chain. The immediate electron acceptor for the enzyme in this species is believed to be ubiquinone. Couples the redox reaction to proton translocation (for every two electrons transferred, four hydrogen ions are translocated across the cytoplasmic membrane), and thus conserves the redox energy in a proton gradient. The chain is NADH-quinone oxidoreductase subunit C from Bartonella quintana (strain Toulouse) (Rochalimaea quintana).